We begin with the raw amino-acid sequence, 397 residues long: CCA-adding enzyme (397 aa).

ATP is bound by residues glycine 26 and arginine 29. CTP-binding residues include glycine 26 and arginine 29. Mg(2+) is bound by residues aspartate 39 and aspartate 41. Arginine 110, aspartate 153, arginine 156, arginine 159, and arginine 162 together coordinate ATP. CTP is bound by residues arginine 110, aspartate 153, arginine 156, arginine 159, and arginine 162.

It belongs to the tRNA nucleotidyltransferase/poly(A) polymerase family. Bacterial CCA-adding enzyme type 3 subfamily. In terms of assembly, homodimer. Requires Mg(2+) as cofactor.

It catalyses the reaction a tRNA precursor + 2 CTP + ATP = a tRNA with a 3' CCA end + 3 diphosphate. The enzyme catalyses a tRNA with a 3' CCA end + 2 CTP + ATP = a tRNA with a 3' CCACCA end + 3 diphosphate. Catalyzes the addition and repair of the essential 3'-terminal CCA sequence in tRNAs without using a nucleic acid template. Adds these three nucleotides in the order of C, C, and A to the tRNA nucleotide-73, using CTP and ATP as substrates and producing inorganic pyrophosphate. tRNA 3'-terminal CCA addition is required both for tRNA processing and repair. Also involved in tRNA surveillance by mediating tandem CCA addition to generate a CCACCA at the 3' terminus of unstable tRNAs. While stable tRNAs receive only 3'-terminal CCA, unstable tRNAs are marked with CCACCA and rapidly degraded. The polypeptide is CCA-adding enzyme (Bacillus cereus (strain 03BB102)).